The chain runs to 298 residues: Probable endonuclease 4 (298 aa).

Zn(2+) contacts are provided by histidine 69, histidine 111, glutamate 146, aspartate 180, histidine 183, histidine 215, aspartate 228, histidine 230, and glutamate 260.

Belongs to the AP endonuclease 2 family. Requires Zn(2+) as cofactor.

It catalyses the reaction Endonucleolytic cleavage to 5'-phosphooligonucleotide end-products.. Functionally, endonuclease IV plays a role in DNA repair. It cleaves phosphodiester bonds at apurinic or apyrimidinic (AP) sites, generating a 3'-hydroxyl group and a 5'-terminal sugar phosphate. In Bacillus cereus (strain B4264), this protein is Probable endonuclease 4.